Reading from the N-terminus, the 139-residue chain is Non-structural protein 1 (139 aa).

The DLNP; interaction with MAP1B signature appears at 136–139 (DLNP).

Belongs to the pneumovirus non-structural protein 1 family. As to quaternary structure, monomer. Homomultimer. Heteromultimer with NS2. Interacts with the matrix protein M. Interacts with host ELOC and CUL2; this interaction allows NS1 to form an active E3 ligase with ELOC and CUL2. Interacts with host IRF3; this interaction leads to the disrupted association of IRF3 with CREBBP and thus reduced binding of IRF3 to the IFN-beta promoter. Interacts with host MAVS; this interaction prevents MAVS binding to RIGI and inhibits signaling pathway leading to interferon production. Interacts with host MAP1B/microtubule-associated protein 1B. Interacts with host TRIM25 (via SPRY domain); this interaction suppresses RIGI ubiquitination and results in decreased interaction between RIGI and MAVS.

The protein resides in the host cytoplasm. It is found in the host mitochondrion. The protein localises to the host nucleus. Its function is as follows. Plays a major role in antagonizing the type I IFN-mediated antiviral response by degrading or inhibiting multiple cellular factors required for either IFN induction or response pathways. Acts cooperatively with NS2 to repress activation and nuclear translocation of host IFN-regulatory factor IRF3. Also disrupts the association of IRF3 with CREBBP. Interacts with host mitochondrial-associated membrane (MAM) MAVS and prevents the interaction with RIGI. Interacts with TRIM25 to suppress TRIM25-mediated RIGI ubiquitination and thereby RIGI-MAVS interaction. Together with NS2, participates in the proteasomal degradation of host STAT2, IRF3, IRF7, TBK1 and RIGI through a NS-degradasome involving CUL2 and Elongin-C. The degradasome requires an intact mitochondrial MAVS. Decreases the levels of host TRAF3 and IKBKE/IKK-epsilon. As functions other than disruptions of the type I IFN-mediated antiviral signaling pathways, induces host SOCS1 and SOCS3 expression. Suppresses premature apoptosis by an NF-kappa-B-dependent, interferon-independent mechanism and thus facilitates virus growth. Additionally, NS1 may serve some inhibitory role in viral transcription and RNA replication. Suppresses proliferation and activation of host CD103+ CD8+ cytotoxic T-lymphocytes and Th17 helper T-lymphocytes. This chain is Non-structural protein 1 (1C), found in Homo sapiens (Human).